We begin with the raw amino-acid sequence, 375 residues long: Chaperone protein DnaJ (375 aa).

The J domain occupies 5 to 70; sequence GYYEVLGVSK…QKRQAYDQFG (66 aa). Residues 142-220 form a CR-type zinc finger; it reads GKEYKIEIPR…CKGEGLTEKR (79 aa). Residues cysteine 155, cysteine 158, cysteine 172, cysteine 175, cysteine 194, cysteine 197, cysteine 208, and cysteine 211 each coordinate Zn(2+). CXXCXGXG motif repeat units lie at residues 155 to 162, 172 to 179, 194 to 201, and 208 to 215; these read CVDCTGSG, CPDCSGTG, CPRCKGKG, and CKTCKGEG.

It belongs to the DnaJ family. As to quaternary structure, homodimer. Zn(2+) is required as a cofactor.

The protein localises to the cytoplasm. Its function is as follows. Participates actively in the response to hyperosmotic and heat shock by preventing the aggregation of stress-denatured proteins and by disaggregating proteins, also in an autonomous, DnaK-independent fashion. Unfolded proteins bind initially to DnaJ; upon interaction with the DnaJ-bound protein, DnaK hydrolyzes its bound ATP, resulting in the formation of a stable complex. GrpE releases ADP from DnaK; ATP binding to DnaK triggers the release of the substrate protein, thus completing the reaction cycle. Several rounds of ATP-dependent interactions between DnaJ, DnaK and GrpE are required for fully efficient folding. Also involved, together with DnaK and GrpE, in the DNA replication of plasmids through activation of initiation proteins. The sequence is that of Chaperone protein DnaJ from Leptospira biflexa serovar Patoc (strain Patoc 1 / Ames).